The chain runs to 248 residues: ATP synthase subunit a, chloroplastic (248 aa).

5 consecutive transmembrane segments (helical) span residues Ala37–Thr57, Val96–Phe116, Ile135–His155, Leu200–Leu220, and Gly221–Gly241.

Belongs to the ATPase A chain family. F-type ATPases have 2 components, CF(1) - the catalytic core - and CF(0) - the membrane proton channel. CF(1) has five subunits: alpha(3), beta(3), gamma(1), delta(1), epsilon(1). CF(0) has four main subunits: a, b, b' and c.

It localises to the plastid. The protein resides in the chloroplast thylakoid membrane. In terms of biological role, key component of the proton channel; it plays a direct role in the translocation of protons across the membrane. The chain is ATP synthase subunit a, chloroplastic from Psilotum nudum (Whisk fern).